A 522-amino-acid polypeptide reads, in one-letter code: Maturase K (522 aa).

It belongs to the intron maturase 2 family. MatK subfamily.

The protein resides in the plastid. Its subcellular location is the chloroplast. Usually encoded in the trnK tRNA gene intron. Probably assists in splicing its own and other chloroplast group II introns. The chain is Maturase K from Schizorhiza neglecta (Lapeirousia neglecta).